We begin with the raw amino-acid sequence, 719 residues long: Photosystem I P700 chlorophyll a apoprotein A1 (719 aa).

A run of 8 helical transmembrane segments spans residues 59–82 (VFSA…FHGA), 145–168 (LYCT…FHYH), 184–208 (LNHH…HVSL), 280–298 (TAHH…GHMY), 335–358 (WHAQ…HHMY), 374–400 (LSLF…IFMV), 422–444 (AIVS…LYIH), and 520–538 (FLVH…LILL). Positions 562 and 571 each coordinate [4Fe-4S] cluster. 2 helical membrane-spanning segments follow: residues 578–599 (HVFL…HFSW) and 653–675 (LSAY…MFLF). His664 provides a ligand contact to chlorophyll a'. 2 residues coordinate chlorophyll a: Met672 and Tyr680. Trp681 contributes to the phylloquinone binding site. A helical transmembrane segment spans residues 713-719 (AVGVAHY).

This sequence belongs to the PsaA/PsaB family. As to quaternary structure, the PsaA/B heterodimer binds the P700 chlorophyll special pair and subsequent electron acceptors. PSI consists of a core antenna complex that captures photons, and an electron transfer chain that converts photonic excitation into a charge separation. The eukaryotic PSI reaction center is composed of at least 11 subunits. The cofactor is P700 is a chlorophyll a/chlorophyll a' dimer, A0 is one or more chlorophyll a, A1 is one or both phylloquinones and FX is a shared 4Fe-4S iron-sulfur center..

The protein resides in the plastid. The protein localises to the chloroplast thylakoid membrane. The enzyme catalyses reduced [plastocyanin] + hnu + oxidized [2Fe-2S]-[ferredoxin] = oxidized [plastocyanin] + reduced [2Fe-2S]-[ferredoxin]. PsaA and PsaB bind P700, the primary electron donor of photosystem I (PSI), as well as the electron acceptors A0, A1 and FX. PSI is a plastocyanin-ferredoxin oxidoreductase, converting photonic excitation into a charge separation, which transfers an electron from the donor P700 chlorophyll pair to the spectroscopically characterized acceptors A0, A1, FX, FA and FB in turn. Oxidized P700 is reduced on the lumenal side of the thylakoid membrane by plastocyanin. In Encephalartos lebomboensis (Lebombo cycad), this protein is Photosystem I P700 chlorophyll a apoprotein A1.